The following is a 273-amino-acid chain: Large ribosomal subunit protein uL2 (273 aa).

Residues 224-260 (AMNPVDHPHGGGEGKTSGGRHPVTPWGKKTKGKKTRK) are disordered. A compositionally biased stretch (basic residues) spans 251 to 260 (KKTKGKKTRK).

This sequence belongs to the universal ribosomal protein uL2 family. As to quaternary structure, part of the 50S ribosomal subunit. Forms a bridge to the 30S subunit in the 70S ribosome.

One of the primary rRNA binding proteins. Required for association of the 30S and 50S subunits to form the 70S ribosome, for tRNA binding and peptide bond formation. It has been suggested to have peptidyltransferase activity; this is somewhat controversial. Makes several contacts with the 16S rRNA in the 70S ribosome. In Orientia tsutsugamushi (strain Ikeda) (Rickettsia tsutsugamushi), this protein is Large ribosomal subunit protein uL2.